Here is a 446-residue protein sequence, read N- to C-terminus: Vacuolar cation/proton exchanger 4 (446 aa).

Residues 1 to 16 (MSSISTESSSNLSLLE) are compositionally biased toward low complexity. Positions 1–33 (MSSISTESSSNLSLLENGGGGSDKPTAETSRRV) are disordered. At 1–69 (MSSISTESSS…MRRILTNLQE (69 aa)) the chain is on the cytoplasmic side. Residues 70–90 (VLLGTKLFILFPAVPLAVVAH) form a helical membrane-spanning segment. At 91–96 (RYDCPR) the chain is on the extracellular side. A helical membrane pass occupies residues 97–117 (AWVFALSLLGLTPLAERISFL). The Cytoplasmic portion of the chain corresponds to 118 to 128 (TEQIAFHTGPT). A helical membrane pass occupies residues 129–149 (VGGLMNATCGNATEMIIAILA). Residues 138 to 173 (GNATEMIIAILAVGQRKMRIVKLSLLGSILSNLLFV) are cation selection. Topologically, residues 150-162 (VGQRKMRIVKLSL) are extracellular. Residues 163-183 (LGSILSNLLFVLGTSLFLGGI) form a helical membrane-spanning segment. The Cytoplasmic portion of the chain corresponds to 184 to 196 (SNLRKHQSFDPRQ). The helical transmembrane segment at 197 to 217 (GDMNSMLLYLALLCQTLPMIM) threads the bilayer. Topologically, residues 218-238 (RFTMEAEEYDGSDVVVLSRAS) are extracellular. The helical transmembrane segment at 239-259 (SFVMLIAYLAFLIFHLFSSHL) threads the bilayer. At 260–285 (SPPPPPLPQREDVHDDDVSDKEEEGA) the chain is on the cytoplasmic side. Residues 286–306 (VIGMWSAIFWLIIMTLLVALL) traverse the membrane as a helical segment. Topologically, residues 307–319 (SDYLVSTIQDAAD) are extracellular. A helical membrane pass occupies residues 320-340 (SWGLSVGFIGIILLPIVGNAA). Residues 337–372 (GNAAEHAGAVIFAFRNKLDITLGIALGSATQIALFV) form a cation selection region. The Cytoplasmic segment spans residues 341–359 (EHAGAVIFAFRNKLDITLG). Residues 360–380 (IALGSATQIALFVVPVTVLVA) traverse the membrane as a helical segment. Residues 381–388 (WTMGIEMD) are Extracellular-facing. The chain crosses the membrane as a helical span at residues 389-409 (LNFNLLETACFALSILVTSLV). The Cytoplasmic portion of the chain corresponds to 410 to 416 (LQDGTSN). The helical transmembrane segment at 417-437 (YMKGLVLLLCYVVIAACFFVS) threads the bilayer. Residues 438 to 446 (NSPSSKLLF) are Extracellular-facing.

The protein belongs to the Ca(2+):cation antiporter (CaCA) (TC 2.A.19) family. Cation/proton exchanger (CAX) subfamily. As to expression, expressed at low levels in all tissues.

The protein resides in the vacuole membrane. Its function is as follows. Vacuolar cation/proton exchanger (CAX). Translocates Ca(2+) and other metal ions into vacuoles using the proton gradient formed by H(+)-ATPase and H(+)-pyrophosphatase. Cation selectivity transport in tobacco root tonoplast vesicles is Cd(2+)&gt;Zn(2+)&gt;&gt;Ca(2+)&gt;&gt;&gt;Mn(2+). In Arabidopsis thaliana (Mouse-ear cress), this protein is Vacuolar cation/proton exchanger 4 (CAX4).